Consider the following 530-residue polypeptide: FSD1-like protein (530 aa).

Met1 bears the N-acetylmethionine mark. Positions 102 to 141 form a coiled coil; it reads KQEQARKSQELQSQISQCNNALENSEELLEFATRSLDIKE. The COS domain maps to 137–194; sequence LDIKEPEEFSKAARQIKDRVTMASAFRLSLKPKVSDNMTHLMVDFSQERQMLQTLKFL. Residues 196–300 form the Fibronectin type-III domain; sequence VPKAPEIDPV…DPVTLETKAL (105 aa). Positions 300-506 constitute a B30.2/SPRY domain; sequence LNFNLDNSSS…LSTGMQVPSA (207 aa). Residues 322-366 are disordered; sequence WDPTGGKGQESKIKGKENKGRSGTPSPKRTSVGSRPPAVRGSRDR. The segment covering 330–341 has biased composition (basic and acidic residues); it reads QESKIKGKENKG. Residues 342–354 show a composition bias toward polar residues; it reads RSGTPSPKRTSVG. Ser520 and Ser523 each carry phosphoserine.

The polypeptide is FSD1-like protein (FSD1L) (Homo sapiens (Human)).